We begin with the raw amino-acid sequence, 583 residues long: Proline--tRNA ligase (583 aa).

This sequence belongs to the class-II aminoacyl-tRNA synthetase family. ProS type 1 subfamily. In terms of assembly, homodimer.

The protein resides in the cytoplasm. The catalysed reaction is tRNA(Pro) + L-proline + ATP = L-prolyl-tRNA(Pro) + AMP + diphosphate. Functionally, catalyzes the attachment of proline to tRNA(Pro) in a two-step reaction: proline is first activated by ATP to form Pro-AMP and then transferred to the acceptor end of tRNA(Pro). As ProRS can inadvertently accommodate and process non-cognate amino acids such as alanine and cysteine, to avoid such errors it has two additional distinct editing activities against alanine. One activity is designated as 'pretransfer' editing and involves the tRNA(Pro)-independent hydrolysis of activated Ala-AMP. The other activity is designated 'posttransfer' editing and involves deacylation of mischarged Ala-tRNA(Pro). The misacylated Cys-tRNA(Pro) is not edited by ProRS. This is Proline--tRNA ligase from Aromatoleum aromaticum (strain DSM 19018 / LMG 30748 / EbN1) (Azoarcus sp. (strain EbN1)).